Consider the following 158-residue polypeptide: Cyclic pyranopterin monophosphate synthase (158 aa).

Residues 74–76 (MCH) and 112–113 (ME) each bind substrate. The active site involves Asp127.

This sequence belongs to the MoaC family. Homohexamer; trimer of dimers.

It catalyses the reaction (8S)-3',8-cyclo-7,8-dihydroguanosine 5'-triphosphate = cyclic pyranopterin phosphate + diphosphate. The protein operates within cofactor biosynthesis; molybdopterin biosynthesis. In terms of biological role, catalyzes the conversion of (8S)-3',8-cyclo-7,8-dihydroguanosine 5'-triphosphate to cyclic pyranopterin monophosphate (cPMP). The sequence is that of Cyclic pyranopterin monophosphate synthase from Helicobacter pylori (strain HPAG1).